The primary structure comprises 85 residues: Progonadoliberin-2 (85 aa).

A signal peptide spans 1-23 (MCVSRLVLLFGLLLCVGAQLSNA). Gln24 is subject to Pyrrolidone carboxylic acid. Position 33 is a glycine amide (Gly33).

The protein belongs to the GnRH family.

The protein localises to the secreted. Stimulates the secretion of gonadotropins. This chain is Progonadoliberin-2 (gnrh2), found in Dicentrarchus labrax (European seabass).